Consider the following 456-residue polypeptide: Acyl-CoA transferase FPSE_08120 (456 aa).

The N-terminal 33 residues, 1 to 33 (MARLLFSGQRLRPSFLRSYIRANPSSTPSATRA), are a transit peptide targeting the mitochondrion.

It belongs to the CoA-transferase III family.

The protein localises to the mitochondrion. Its function is as follows. Acyl-CoA transferase; part of the Fusarium detoxification of benzoxazolinone cluster involved in the degradation of benzoxazolinones produced by the host plant. Maize, wheat, and rye produce the 2 benzoxazinone phytoanticipins 2,4-dihy-droxy-7-methoxy-1,4-benzoxazin-3-one (DIMBOA) and 2,4-dihydroxy-1,4-benzoxazin-3-one (DIBOA) that, due to their inherent instability once released, spontaneously degrade to the more stable corresponding benzoxazolinones, 6-methoxy-2-benzoxazolinone (MBOA) and 2-benzoxazolinone (BOA), respectively. The first step in the detoxification of benzoxazolinones involves the hydrolysis of the cyclic ester bond of benzoxazolinones by the gamma-lactamase FDB1 to aminophenols. FDB1 is able to convert 2-benzoxazolinone (BOA) into 2-aminophenol (2-AP), as well as 6-methoxy-2-benzoxazolinone (MBOA) into 5-methoxy-2-aminophenol (2-AMP). The N-malonyltransferase FDB2 then metabolizes aminophenols via N-malonylation to non-toxic malonamic acids. FDB2 converts 2-AP into N-(2-hydroxyphenyl) malonamic acid (HPMA) and 2-AMP into N-(2-hydroxy-4-methoxyphenyl) malonamic acid (HMPMA). The cluster also contains 2 transcription factors (FDB3 and FPSE_08121), an aldo-keto reductase (FPSE_08125) that possibly associates with a ketone component of BOA and MBOA degradation, an esterase (FPSE_08126), an acyl-CoA transferase (FPSE_08120), a solute carrier protein (FPSE_08119) and a transmembrane transporter (FPSE_08127) proposed to shuttle metabolites of benzoxazolinone degradation. In Fusarium pseudograminearum (strain CS3096) (Wheat and barley crown-rot fungus), this protein is Acyl-CoA transferase FPSE_08120.